We begin with the raw amino-acid sequence, 291 residues long: 33 kDa chaperonin (291 aa).

2 disulfide bridges follow: C237–C239 and C270–C273.

This sequence belongs to the HSP33 family. Post-translationally, under oxidizing conditions two disulfide bonds are formed involving the reactive cysteines. Under reducing conditions zinc is bound to the reactive cysteines and the protein is inactive.

The protein localises to the cytoplasm. Redox regulated molecular chaperone. Protects both thermally unfolding and oxidatively damaged proteins from irreversible aggregation. Plays an important role in the bacterial defense system toward oxidative stress. This chain is 33 kDa chaperonin, found in Halalkalibacterium halodurans (strain ATCC BAA-125 / DSM 18197 / FERM 7344 / JCM 9153 / C-125) (Bacillus halodurans).